The following is a 323-amino-acid chain: Beta-ketoacyl-[acyl-carrier-protein] synthase III (323 aa).

Catalysis depends on residues cysteine 113 and histidine 250. Residues 251–255 (QANKR) form an ACP-binding region. Residue asparagine 280 is part of the active site.

It belongs to the thiolase-like superfamily. FabH family. In terms of assembly, homodimer.

Its subcellular location is the cytoplasm. The enzyme catalyses malonyl-[ACP] + acetyl-CoA + H(+) = 3-oxobutanoyl-[ACP] + CO2 + CoA. The protein operates within lipid metabolism; fatty acid biosynthesis. Catalyzes the condensation reaction of fatty acid synthesis by the addition to an acyl acceptor of two carbons from malonyl-ACP. Catalyzes the first condensation reaction which initiates fatty acid synthesis and may therefore play a role in governing the total rate of fatty acid production. Possesses both acetoacetyl-ACP synthase and acetyl transacylase activities. Its substrate specificity determines the biosynthesis of branched-chain and/or straight-chain of fatty acids. The protein is Beta-ketoacyl-[acyl-carrier-protein] synthase III of Brucella suis (strain ATCC 23445 / NCTC 10510).